The chain runs to 248 residues: Cell division protein ZapD (248 aa).

The protein belongs to the ZapD family. As to quaternary structure, interacts with FtsZ.

It is found in the cytoplasm. Cell division factor that enhances FtsZ-ring assembly. Directly interacts with FtsZ and promotes bundling of FtsZ protofilaments, with a reduction in FtsZ GTPase activity. This chain is Cell division protein ZapD, found in Aliivibrio salmonicida (strain LFI1238) (Vibrio salmonicida (strain LFI1238)).